The following is a 635-amino-acid chain: Interferon-induced GTP-binding protein Mx1 (635 aa).

The 279-residue stretch at 31–309 (DLALPAIAVI…LVHHIELSLP (279 aa)) folds into the Dynamin-type G domain. A G1 motif region spans residues 41-48 (GDQSSGKS). 41–48 (GDQSSGKS) serves as a coordination point for GTP. Residues 66 to 68 (VTR) are G2 motif. The interval 147 to 150 (DLPG) is G3 motif. GTP contacts are provided by residues 147–151 (DLPGI) and 216–219 (TKPD). Residues 216-219 (TKPD) form a G4 motif region. Positions 248-251 (RCRG) are G5 motif. Residues 549–635 (LEELMRHLKS…MEARNYLVKF (87 aa)) form the GED domain.

This sequence belongs to the TRAFAC class dynamin-like GTPase superfamily. Dynamin/Fzo/YdjA family.

Its subcellular location is the cytoplasm. This Ictalurus punctatus (Channel catfish) protein is Interferon-induced GTP-binding protein Mx1 (mx1).